Reading from the N-terminus, the 110-residue chain is Neural hemoglobin (110 aa).

The region spanning 2 to 110 is the Globin domain; sequence VNWAAVVDDF…HAIDDILSHL (109 aa). His70 provides a ligand contact to heme.

It belongs to the globin family. As to quaternary structure, homotetramer. Self-associates in the deoxy state. Seems to dissociate upon oxygenation.

Functionally, acts as an oxygen store capable of sustaining neuronal activity in an anoxic environment for 5 to 30 minutes. The polypeptide is Neural hemoglobin (Cerebratulus lacteus (Milky ribbon worm)).